The chain runs to 242 residues: DNA repair protein RecO (242 aa).

Belongs to the RecO family. As to quaternary structure, monomer.

Functionally, involved in DNA repair and RecF pathway recombination. In Shigella flexneri serotype 5b (strain 8401), this protein is DNA repair protein RecO.